The primary structure comprises 119 residues: uncharacterized protein (119 aa).

It localises to the mitochondrion. This is an uncharacterized protein from Arabidopsis thaliana (Mouse-ear cress).